Reading from the N-terminus, the 155-residue chain is Biotin carboxyl carrier protein of acetyl-CoA carboxylase (155 aa).

One can recognise a Biotinyl-binding domain in the interval 72–155 (AASDELSGHL…EFDEPLIVIE (84 aa)). Lys-121 is modified (N6-biotinyllysine).

In terms of assembly, homodimer.

The protein operates within lipid metabolism; fatty acid biosynthesis. In terms of biological role, this protein is a component of the acetyl coenzyme A carboxylase complex; first, biotin carboxylase catalyzes the carboxylation of the carrier protein and then the transcarboxylase transfers the carboxyl group to form malonyl-CoA. The chain is Biotin carboxyl carrier protein of acetyl-CoA carboxylase (accB) from Haemophilus influenzae (strain ATCC 51907 / DSM 11121 / KW20 / Rd).